The sequence spans 131 residues: Transcription antitermination protein NusB (131 aa).

It belongs to the NusB family.

Its function is as follows. Involved in transcription antitermination. Required for transcription of ribosomal RNA (rRNA) genes. Binds specifically to the boxA antiterminator sequence of the ribosomal RNA (rrn) operons. The sequence is that of Transcription antitermination protein NusB from Ligilactobacillus salivarius (strain UCC118) (Lactobacillus salivarius).